A 531-amino-acid polypeptide reads, in one-letter code: Peptide chain release factor 3 (531 aa).

The 269-residue stretch at 10–278 folds into the tr-type G domain; sequence RRRRTFAIIS…SLIDWAPAPK (269 aa). Residues 19-26, 87-91, and 141-144 contribute to the GTP site; these read SHPDAGKT, DTPGH, and NKYD.

It belongs to the TRAFAC class translation factor GTPase superfamily. Classic translation factor GTPase family. PrfC subfamily.

It localises to the cytoplasm. Increases the formation of ribosomal termination complexes and stimulates activities of RF-1 and RF-2. It binds guanine nucleotides and has strong preference for UGA stop codons. It may interact directly with the ribosome. The stimulation of RF-1 and RF-2 is significantly reduced by GTP and GDP, but not by GMP. This chain is Peptide chain release factor 3, found in Neisseria gonorrhoeae (strain ATCC 700825 / FA 1090).